Reading from the N-terminus, the 813-residue chain is DNA gyrase subunit A (813 aa).

The Topo IIA-type catalytic domain occupies 38-504; that stretch reads LPDVRDGLKP…EIEYLDVEDF (467 aa). The O-(5'-phospho-DNA)-tyrosine intermediate role is filled by tyrosine 126. The GyrA-box motif lies at 531–537; the sequence is QNRGGKG.

It belongs to the type II topoisomerase GyrA/ParC subunit family. As to quaternary structure, heterotetramer, composed of two GyrA and two GyrB chains. In the heterotetramer, GyrA contains the active site tyrosine that forms a transient covalent intermediate with DNA, while GyrB binds cofactors and catalyzes ATP hydrolysis.

The protein localises to the cytoplasm. The enzyme catalyses ATP-dependent breakage, passage and rejoining of double-stranded DNA.. A type II topoisomerase that negatively supercoils closed circular double-stranded (ds) DNA in an ATP-dependent manner to modulate DNA topology and maintain chromosomes in an underwound state. Negative supercoiling favors strand separation, and DNA replication, transcription, recombination and repair, all of which involve strand separation. Also able to catalyze the interconversion of other topological isomers of dsDNA rings, including catenanes and knotted rings. Type II topoisomerases break and join 2 DNA strands simultaneously in an ATP-dependent manner. This chain is DNA gyrase subunit A, found in Treponema pallidum (strain Nichols).